The sequence spans 330 residues: Putative aminohydrolase AF_1775 (330 aa).

Zn(2+)-binding residues include H54, H56, H181, and D253.

It belongs to the metallo-dependent hydrolases superfamily. ATZ/TRZ family.

In Archaeoglobus fulgidus (strain ATCC 49558 / DSM 4304 / JCM 9628 / NBRC 100126 / VC-16), this protein is Putative aminohydrolase AF_1775.